The sequence spans 303 residues: Crk-like protein (303 aa).

The 89-residue stretch at 14–102 folds into the SH2 domain; sequence WYMGPVSRQE…LDTTTLIEPA (89 aa). In terms of domain architecture, SH3 1 spans 123 to 183; it reads ENLEYVRTLY…PVPYVEKLVR (61 aa). The residue at position 127 (tyrosine 127) is a Phosphotyrosine. Residues 184–204 are disordered; that stretch reads SSPHGKHGNRNSNSYGIPEPA. At tyrosine 207 the chain carries Phosphotyrosine. One can recognise an SH3 2 domain in the interval 235–296; sequence NGPVFAKAIQ…PFTHVKIFDP (62 aa).

This sequence belongs to the CRK family. Interacts with INPP5D/SHIP1. Interacts with DOCK2 and EPOR. Interacts with phosphorylated CBLB and IRS4. Interacts with BCAR1/CAS and NEDD9/HEF1.

May mediate the transduction of intracellular signals. This chain is Crk-like protein, found in Rattus norvegicus (Rat).